The following is a 465-amino-acid chain: Neuraminidase (465 aa).

Residues 1-11 (MLPSTIQTLTL) lie on the Intravirion side of the membrane. The helical transmembrane segment at 12-34 (FLTSGGVLLSLYVSASLSYLLYS) threads the bilayer. Residues 13-35 (LTSGGVLLSLYVSASLSYLLYSD) are involved in apical transport and lipid raft association. The Virion surface portion of the chain corresponds to 35 to 465 (DILLKFSSKI…DTVTGVDMAL (431 aa)). The hypervariable stalk region stretch occupies residues 38-85 (LKFSSKITAPTMTLDCANASNVQAVNRSATKEMTFLLPEPEWTYPRLS). N-linked (GlcNAc...) asparagine; by host glycosylation is found at Asn-55 and Asn-63. Disulfide bonds link Cys-86–Cys-419, Cys-121–Cys-126, Cys-181–Cys-228, Cys-230–Cys-235, Cys-276–Cys-290, Cys-278–Cys-288, Cys-317–Cys-336, and Cys-423–Cys-446. The head of neuraminidase stretch occupies residues 88 to 465 (GSTFQKALLI…DTVTGVDMAL (378 aa)). Arg-115 is a binding site for substrate. Asn-143 is a glycosylation site (N-linked (GlcNAc...) asparagine; by host). The active-site Proton donor/acceptor is Asp-148. Arg-149 contacts substrate. 274 to 275 (EE) lines the substrate pocket. Asn-283 carries N-linked (GlcNAc...) asparagine; by host glycosylation. Substrate is bound at residue Arg-291. Ca(2+)-binding residues include Asp-292, Thr-296, Asp-323, Gly-343, and Gly-345. Arg-373 serves as a coordination point for substrate. The active-site Nucleophile is the Tyr-408.

It belongs to the glycosyl hydrolase 34 family. In terms of assembly, homotetramer. Ca(2+) serves as cofactor. N-glycosylated.

The protein resides in the virion membrane. It localises to the host apical cell membrane. It carries out the reaction Hydrolysis of alpha-(2-&gt;3)-, alpha-(2-&gt;6)-, alpha-(2-&gt;8)- glycosidic linkages of terminal sialic acid residues in oligosaccharides, glycoproteins, glycolipids, colominic acid and synthetic substrates.. Its activity is regulated as follows. Inhibited by the neuraminidase inhibitors zanamivir (Relenza) and oseltamivir (Tamiflu). These drugs interfere with the release of progeny virus from infected cells and are effective against all influenza strains. Resistance to neuraminidase inhibitors is quite rare. Catalyzes the removal of terminal sialic acid residues from viral and cellular glycoconjugates. Cleaves off the terminal sialic acids on the glycosylated HA during virus budding to facilitate virus release. Additionally helps virus spread through the circulation by further removing sialic acids from the cell surface. These cleavages prevent self-aggregation and ensure the efficient spread of the progeny virus from cell to cell. Otherwise, infection would be limited to one round of replication. Described as a receptor-destroying enzyme because it cleaves a terminal sialic acid from the cellular receptors. May facilitate viral invasion of the upper airways by cleaving the sialic acid moieties on the mucin of the airway epithelial cells. Likely to plays a role in the budding process through its association with lipid rafts during intracellular transport. May additionally display a raft-association independent effect on budding. Plays a role in the determination of host range restriction on replication and virulence. Sialidase activity in late endosome/lysosome traffic seems to enhance virus replication. This is Neuraminidase from Influenza B virus (strain B/Beijing/1/1987).